Consider the following 559-residue polypeptide: 2-isopropylmalate synthase (559 aa).

Positions 33–307 (PIWCSSDLRD…DPQLDFSDID (275 aa)) constitute a Pyruvate carboxyltransferase domain. Asp42, His246, His248, and Asn282 together coordinate Mg(2+). The regulatory domain stretch occupies residues 439–559 (ANTPYALVSH…SLSQQEAKAA (121 aa)).

The protein belongs to the alpha-IPM synthase/homocitrate synthase family. LeuA type 2 subfamily. In terms of assembly, homodimer. Mg(2+) serves as cofactor.

The protein localises to the cytoplasm. It catalyses the reaction 3-methyl-2-oxobutanoate + acetyl-CoA + H2O = (2S)-2-isopropylmalate + CoA + H(+). The protein operates within amino-acid biosynthesis; L-leucine biosynthesis; L-leucine from 3-methyl-2-oxobutanoate: step 1/4. Catalyzes the condensation of the acetyl group of acetyl-CoA with 3-methyl-2-oxobutanoate (2-ketoisovalerate) to form 3-carboxy-3-hydroxy-4-methylpentanoate (2-isopropylmalate). This Pseudomonas fluorescens (strain SBW25) protein is 2-isopropylmalate synthase.